The primary structure comprises 4293 residues: MPLGAPALLALALGLGLWLGALAGDPGRGCGPCPLPCFCGPAPDAACRVNCSGRWLQTLGPSLRIPADATALDLSHNLLQTLDIGLLVNLSALVELDLSNNRISTLEEGVFANLFNLSEINLSGNPFECNCGLAWLPRWAKEHQVHVVQSEATTCRGPIPLAGQPLLSIPLLDNACGEEYVACLPDNSSGAVAAVPFYFAHEGPLETEACSAFCFSAGEGLAALSEQNQCLCGAGQASNSSAACSSWCSSISLSLNSACGGPTLLQHTFPASPGATLVGPHGPLASGQPADFHITSSLPISSTRWNFGDGSPEVDMASPAATHFYVLPGSYHMTVVLALGAGSALLETEVQVEATPTVLELVCPSFVHSNESLELGIRHRGGSALEVTYSILALDKEPAQVVHPLCPLDTEIFPGNGHCYRLVAEKAPWLQAQEQCRTWAGAALAMVDSPAIQHFLVSKVTRSLDVWIGFSSVEGTEGLDPRGEAFSLESCQNWLPGEPHPATAEHCVRLGPAGQCNTDLCSAPHSYVCELRPGGPVWDTENFVMGMSGGGLSGPLHPLAQQETVQGPLRPVEVMVFPGLSPSREAFLTAAEFSTQKLEEPAQMRLQVYRPSGGAAAVPEGSSEPDNRTEPAPKCVPEELWCPGANVCIPFDASCNSHVCINGSVSRLGLSRASYTLWKEFFFSVPAGPPTQYLVTLHSQDVPMLPGDLIGLQHDAGPGTLLQCPLASSCPGQALYLSTNASDWMTNLPVHLEEAWAGPVCSLQLLLVTERLTPLLGLGPNPGLQHPGHYEVRATVGNSVSRQNLSCSFSVVSPIAGLRVIHPIPLDGHIYVPTNGSVLVLQVDSGANATATAQWFGGNISAPFEDACPPEVDFLKQDCTEEANGTLFSVLMLPRLKEGDHTVEIVAQNGASQANLSLRVTAEEPICGLRAVPSPEARVLQGILVRYSPMVEAGSDVAFRWTIDDKQSLTFHNTVFNVIYQSAAIFKLSLTASNHVSNITVNYNVTVERMNKMHGLWVSAVPTVLPPNATLALTGGVLVDSAVEVAFLWNFGDGEQVLRQFKPPYDESFQVPDPTVAQVLVEHNTTHIYTTPGEYNLTVLVSNTYENLTQQVTVSVRTVLPNVAIGMSSNVLVAGQPITFSPYPLPSTDGVLYTWDFGDGSPVLIQSQPVLNHTYSMTGAYRITLEVNNTVSSVTAHADIRVFQELHGLTVYLSPSVEQGAPMVVSASVESGDNITWTFDMGDGTVFTGPEATVQHVYLRAQNFTVTVEAANPAGHLSQSLHVQVFVLEVLHIEPSTCIPTQPSAQLMAHVTGDPVHYLFDWTFGDGSSNVTVHGHPSVTHNFTRSGIFPLALVLSSHVNKAHYFTSICVEPEIRNITLQPERQFVKLGDEARLVAYSWPPFPYRYTWDFGTEDTTHTQTGGSEVKFIYREPGSYLVIVTVSNNISSTNDSAFVEVQEPVLVTGIRINGSHVLELQQPYLLSAMGSGSPATYLWELGDGSQSEGPEVTHIYSSTGDFTVRVSGWNEVSRSEAQLNITVKQRVRGLTINASRTVVPLNGSVSFSTLLEVGSDVHYSWVLCDRCTPIPGGPTISYTFRSVGTFNIIVTAENEVGSAQDSIFIYVLQFIEGLQVAGGDNGCCFPTNYTLQLQAAVRDGTNISYSWTAQQEGSLITLFGSGKCFSLTSLKASTYYVHLRATNMLGSAAANRTIDFVEPVESLILSASPNPAAVNMSLTLCAELAGGSGVVYTWYLEEGLSWKTSMPSTTHTFAAPGLHLVRVTAENQLGSVNATVEVAIQVPVGGLSIRTSEPDSIFVAAGSTLPFWGQLAEGTNVTWCWTLPGGSKDSQYIAVRFSTAGSFSLQLNASNAVSWVSAMYNLTVEEPIVNLMLWASSKVVAPGQPVHFEILLAAGSALTFRLQVGGSVPEVLPSPHFSHSFFRVGDHLVNVQAENHVSHAQAQVRILVLEAVVGLQVPNCCEPGMATGTEKNFTARVQRGSRVAYAWYFSLQKVQGDSLVILSGRDVTYTPVAAGLLEIHVRAFNELGGVNLTLMVEVQDIIQYVTLQSGRCFTNRSARFEAATSPSPRRVTYHWDFGDGTPVQKTEEFWADHYYLRPGDYHVEVNATNLVSFFVAQATVTVQVLACREPEVEVALPLQVLMRRSQRNYLEAHVDLRNCVSYQTEYRWEIYRTASCQRPGRMAQMVLPGVDVSRPQLVVPRLALPVGHYCFVFVVSFGDTPLARSIQANVTVAAERLVPIIEGGSYRVWSDTQDLVLDGSKSYDPNLEDGDQTPLNFHWACVASTQSETGGCVLNFGPRGSSVVTIPLERLEAGVEYTFNLIVWKAGRKEEATNQTVLIRSGRVPIVSLECVSCKAQAVYEVSRSSYVYLEGHCHNCSRGYKQGCWAARTFSNKTLVLNETTTSTGSTGMNLVVRPGALRDGEGYIFTLTVLGHSGEEEGCASIRLSPNRPPLGGSCRLFPLDSVRGLTTKVHFECTGWRDAEDGGAPLVYALLLKRCRQSYCENFCIYKGSLSTYGAVLPPGFQPLFVVSLAVVVQDQLGAAVVALNRSLTIVLPEPSGNPADLVPWLHSLTASVLPGLLKQADPQHVIEYSLALITVLNEYEQAPDVSEPNVEQQLRAQMRKNITETLISLRVNTVDDIQQITAALAQCMVSSRELMCRSCLKKMLQKLEGMMRILQAETTEGTLTPTTIADSILNITGDLIHLASLDMQGPQPLELGVEPPSLMVASKAYNLSSALMRILMRSRVLNEEPLTLAGEEIVALGKRSDPLSLLCYGKALGPSCHFSIPEAFSGALSNLSDVVQLIFLVDSNPFPFGYISNYTVSTKVASMAFQTQTGTQIPIEQLAAERAITVKVPNNSDQAAQSSHNPVGSTIVQPQTSVSAVVTADNSNPQAGLHLRITYTVLNERYLSAEPEPYLAVYLHSVSQPNEYNCSASRRISLEVLEGADHRLYTFFIAPGTGTLDRSYYLNLTSHFHWSALEVSVGLYTSLCQYFSEEMMMWRTEGIVPLEETSPSQAVCLTRHLTAFGASLFVPPSHVQFIFPEPSASINYIVLLTCVICLVTYVVMAMILRKLDQLDVSRVRVIPFCGKGGRFKYEILVKTGWSRGSGTTAHVGIMLYGEDNRSGHRHLDGDRAFHRNSLDIFQIATPHSLGSVWKIRVWHDNKGLSPAWFLQHIIVRDLQSARSTFFLVNDWLSVETEANGGLVEKEVLAANEAALWQFQRLLVAELQRGFFDKHIWLSIWDRPPRSRFTRVQRVTCCVLLLCLFLAANAVWYGVVRDTTYSMGPVSSLISPGVDTVAIGLVSSVVVYPVYLAVLFLFRMSRSKVSGDQNPTPTGQQALDVDSYLDPSVLDSSLLTLSGLTEAFAGQVKNDLFLEDAKSLVCWPSSEGTLSWPDLLSDPSVVSSTLQRLTQGRPGCMLGSEEDGASLVSPSLPAKYLSASDEDLIHQVLADGANNLVPTQDTLLETDLLTSLSSVPGEKTETLILQTVGEERPASMGLSWEQSPVTRLSRTGLVEGFQKRLLPAWCAPLAHGLSLLLVAVAVAVSGWIGASFPPSVSVMWLLSSSSSFLASFLGWEPLKVLLEALYFSLVAKRLHPDEDDTLVESPAVTPVSERVPRVRPPHGFALFLAKEEARKVKRLHDMLKRLLVYMLFLLVTLLANYGDASCHGHAYRLQSAIKQELDSQAFLAITRSDEFWPWMSHVFLPYVHGNQSSPELGPPRLRQVRLQEAFCPDPSSSEHMCSAAGSLSTSDYGIGWQSVVQNGSETWAYSAPDLLGAWYWGYCAVYDSGGYIQELGLSLEESRARLGFLQLHNWLDSRSRAVFVELTRYSPAVGLHAAVTLRLEFPVAGHALAAFSVRPFALRRLSTGLSLPLLTSVCLLLFALYFSMAEVQTWRKDGCACTARPDTWARCLLVILTAATGLVRLAQLGIADRQWTHFVQDHPRHFTSFDQVAQLGSVARGLAASLLFLLLVKAAQQLRFVRQWSVFGKTLCRALPELMGATLGLVLLGVAYAQMAILLISSGADTLYNMARAFLVLCPGARVPTLCPSESWYLSPLLCVGLWALRVWGALRLGAILLRWRYHALRGELYRPAWEPQDYEMVELFLRRLRLWMGFSKVKEFRHKVRFEGMDPLPSRSSRGSKSSPVVLPPSSGSEASHPSTSSSQPDGPSASLSRSTLKLEPEPSRLHAVFESLLVQFDRLNQATEDVYQLEQQLQSLQGHGHNGPPSSPSPGCFPGSQPALPSRLSRASQGLDQTVGPNRVSLWPNNKVHPSST.

The signal sequence occupies residues 1-23; sequence MPLGAPALLALALGLGLWLGALA. Residues 24–67 enclose the LRRNT domain; the sequence is GDPGRGCGPCPLPCFCGPAPDAACRVNCSGRWLQTLGPSLRIPA. The Extracellular portion of the chain corresponds to 24 to 3066; that stretch reads GDPGRGCGPC…IFPEPSASIN (3043 aa). N-linked (GlcNAc...) asparagine glycosylation is found at N50 and N89. LRR repeat units lie at residues 68–91 and 92–113; these read DATALDLSHNLLQTLDIGLLVNLS and ALVELDLSNNRISTLEEGVFAN. 2 N-linked (GlcNAc...) asparagine glycosylation sites follow: N116 and N121. The 54-residue stretch at 125–178 folds into the LRRCT domain; the sequence is NPFECNCGLAWLPRWAKEHQVHVVQSEATTCRGPIPLAGQPLLSIPLLDNACGE. Residues 177-271 form the WSC domain; it reads GEEYVACLPD…PTLLQHTFPA (95 aa). 2 N-linked (GlcNAc...) asparagine glycosylation sites follow: N187 and N239. The 88-residue stretch at 272–359 folds into the PKD 1 domain; sequence SPGATLVGPH…VQVEATPTVL (88 aa). An N-linked (GlcNAc...) asparagine glycan is attached at N370. Residues 415–530 enclose the C-type lectin domain; the sequence is GNGHCYRLVA…CSAPHSYVCE (116 aa). Disulfide bonds link C436-C529 and C507-C521. The segment at 613–632 is disordered; it reads GGAAAVPEGSSEPDNRTEPA. N627 is a glycosylation site (N-linked (GlcNAc...) asparagine). Residues 633–666 form the LDL-receptor class A; atypical domain; the sequence is PKCVPEELWCPGANVCIPFDASCNSHVCINGSVS. Disulfide bonds link C635-C648 and C642-C660. N662, N740, N804, N835, N848, N859, N884, N915, N998, N1004, N1028, N1084, N1096, N1107, N1172, N1188, N1234, N1263, N1330, N1342, N1376, N1444, N1449, N1468, N1535, N1548, N1557, N1643, N1657, N1706, N1730, N1788, N1831, N1863, and N1876 each carry an N-linked (GlcNAc...) asparagine glycan. 15 consecutive PKD domains span residues 849 to 922, 929 to 1014, 1017 to 1123, 1121 to 1209, 1207 to 1292, 1288 to 1377, 1376 to 1463, 1462 to 1545, 1544 to 1629, 1630 to 1718, 1716 to 1802, 1804 to 1886, 1885 to 1970, 1972 to 2053, and 2056 to 2144; these read ATAT…RVTA, LRAV…NKMH, WVSA…LPNV, PNVA…LHGL, HGLT…EVLH, LEVL…IRNI, NITL…VLVT, VTGI…VRGL, GLTI…IEGL, QVAG…VESL, ESLI…VGGL, IRTS…IVNL, NLML…VVGL, VPNC…MVEV, and IIQY…ACRE. 18 N-linked (GlcNAc...) asparagine glycosylation sites follow: N1987, N2046, N2070, N2121, N2244, N2349, N2391, N2408, N2414, N2563, N2640, N2713, N2749, N2813, N2836, N2873, N2948, and N2986. Positions 2142–2828 constitute an REJ domain; it reads CREPEVEVAL…QLIFLVDSNP (687 aa). The GAIN-B domain occupies 2857 to 3055; it reads PIEQLAAERA…SLFVPPSHVQ (199 aa). Residues C3007 and C3035 are joined by a disulfide bond. Residues 3007-3055 form a GPS region; the sequence is CQYFSEEMMMWRTEGIVPLEETSPSQAVCLTRHLTAFGASLFVPPSHVQ. The chain crosses the membrane as a helical span at residues 3067 to 3087; sequence YIVLLTCVICLVTYVVMAMIL. The Cytoplasmic segment spans residues 3088–3269; sequence RKLDQLDVSR…DRPPRSRFTR (182 aa). The PLAT domain maps to 3110–3225; the sequence is FKYEILVKTG…EANGGLVEKE (116 aa). The chain crosses the membrane as a helical span at residues 3270–3290; sequence VQRVTCCVLLLCLFLAANAVW. The Extracellular segment spans residues 3291–3315; that stretch reads YGVVRDTTYSMGPVSSLISPGVDTV. A helical membrane pass occupies residues 3316–3336; it reads AIGLVSSVVVYPVYLAVLFLF. Residues 3337-3549 are Cytoplasmic-facing; the sequence is RMSRSKVSGD…LPAWCAPLAH (213 aa). The chain crosses the membrane as a helical span at residues 3550-3570; sequence GLSLLLVAVAVAVSGWIGASF. At 3571 to 3572 the chain is on the extracellular side; the sequence is PP. The helical transmembrane segment at 3573 to 3593 threads the bilayer; sequence SVSVMWLLSSSSSFLASFLGW. At 3594–3655 the chain is on the cytoplasmic side; that stretch reads EPLKVLLEAL…LAKEEARKVK (62 aa). A helical membrane pass occupies residues 3656–3676; sequence RLHDMLKRLLVYMLFLLVTLL. The Extracellular segment spans residues 3677 to 3891; it reads ANYGDASCHG…RLSTGLSLPL (215 aa). N-linked (GlcNAc...) asparagine glycans are attached at residues N3728 and N3780. A helical transmembrane segment spans residues 3892 to 3912; sequence LTSVCLLLFALYFSMAEVQTW. Over 3913–3925 the chain is Cytoplasmic; the sequence is RKDGCACTARPDT. The chain crosses the membrane as a helical span at residues 3926 to 3946; the sequence is WARCLLVILTAATGLVRLAQL. Over 3947 to 3974 the chain is Extracellular; sequence GIADRQWTHFVQDHPRHFTSFDQVAQLG. The chain crosses the membrane as a helical span at residues 3975–3995; sequence SVARGLAASLLFLLLVKAAQQ. At 3996 to 4017 the chain is on the cytoplasmic side; sequence LRFVRQWSVFGKTLCRALPELM. The chain crosses the membrane as a helical span at residues 4018-4038; it reads GATLGLVLLGVAYAQMAILLI. Residues 4039–4080 are Extracellular-facing; that stretch reads SSGADTLYNMARAFLVLCPGARVPTLCPSESWYLSPLLCVGL. The chain crosses the membrane as a helical span at residues 4081–4100; the sequence is WALRVWGALRLGAILLRWRY. Residues 4101–4293 are Cytoplasmic-facing; it reads HALRGELYRP…PNNKVHPSST (193 aa). 2 disordered regions span residues 4150–4197 and 4235–4293; these read PLPS…STLK and SLQG…PSST. The span at 4153-4172 shows a compositional bias: low complexity; that stretch reads SRSSRGSKSSPVVLPPSSGS. Residue S4156 is modified to Phosphoserine; by PRKX; in vitro. Over residues 4173–4195 the composition is skewed to polar residues; it reads EASHPSTSSSQPDGPSASLSRST. Positions 4210 to 4241 form a coiled coil; sequence ESLLVQFDRLNQATEDVYQLEQQLQSLQGHGH. Residues 4238–4256 show a composition bias toward low complexity; the sequence is GHGHNGPPSSPSPGCFPGS. The segment covering 4265-4276 has biased composition (polar residues); that stretch reads SRASQGLDQTVG.

This sequence belongs to the polycystin family. Component of the heterotetrameric polycystin channel complex with PKD2; the tetramer contains one PKD1 chain and three PKD2 chains. Interacts with PKD2; the interaction is required for ciliary localization. Interacts with PKD2L1. Interacts with PRKX; involved in differentiation and controlled morphogenesis of the kidney. Interacts (via extracellular domain) with WNT3A, WNT4 and WNT9B. Interacts with WNT5A, DVL1 and DVL2. Interacts with NPHP1 (via SH3 domain). Interacts with BBS1, BBS4, BBS5 and TTC8. Interacts with RGS7. Interacts (via C-terminal domain) with RABEP1; the interaction connects PKD1:PKD2 to GGA1 and ARL3 that mediate the ciliary targeting. Interacts (via the PKD repeats in the N-terminal extracellular region) with EPCIP; the interaction is not dependent on N-glycosylation of either protein. In terms of processing, N-glycosylated. After synthesis, undergoes autoproteolytic cleavage between Leu-3040 and Thr-3041 in the GPS region of the GAIN-B domain. Cleavage at the GPS region occurs through a cis-autoproteolytic mechanism involving an ester-intermediate via N-O acyl rearrangement. This process takes place in the early secretory pathway, depends on initial N-glycosylation, and requires the REJ domain. PKD1 is ubiquitously and incompletely cleaved in wild-type mice, so that uncleaved and cleaved PKD1 molecules coexist. The differential patterns of cleavage during embryonic development, as well as in adult mice, suggest different functions of uncleaved and cleaved molecules.

It localises to the cell membrane. It is found in the cell projection. The protein localises to the cilium. The protein resides in the endoplasmic reticulum. Its subcellular location is the golgi apparatus. It localises to the vesicle. It is found in the secreted. The protein localises to the extracellular exosome. Component of a heteromeric calcium-permeable ion channel formed by PKD1 and PKD2 that is activated by interaction between PKD1 and a Wnt family member, such as WNT3A and WNT9B. Both PKD1 and PKD2 are required for channel activity. Involved in renal tubulogenesis. Involved in fluid-flow mechanosensation by the primary cilium in renal epithelium. Acts as a regulator of cilium length, together with PKD2. The dynamic control of cilium length is essential in the regulation of mechanotransductive signaling. The cilium length response creates a negative feedback loop whereby fluid shear-mediated deflection of the primary cilium, which decreases intracellular cAMP, leads to cilium shortening and thus decreases flow-induced signaling. May be an ion-channel regulator. Involved in adhesive protein-protein and protein-carbohydrate interactions. Likely to be involved with polycystin-1-interacting protein 1 in the detection, sequestration and exocytosis of senescent mitochondria. This is Polycystin-1 from Mus musculus (Mouse).